A 192-amino-acid polypeptide reads, in one-letter code: Vascular endothelial growth factor A (192 aa).

The signal sequence occupies residues 1-26 (MNFLLTWIHWGLAALLYFHNAKVLQA). 3 cysteine pairs are disulfide-bonded: Cys-52-Cys-94, Cys-83-Cys-128, and Cys-87-Cys-130. N-linked (GlcNAc...) asparagine glycosylation is present at Asn-101.

This sequence belongs to the PDGF/VEGF growth factor family. In terms of assembly, homodimer; disulfide-linked. Also found as heterodimer with PGF. Interacts with FLT1/VEGFR1 and KDR/VEGFR2 receptors, heparan sulfate and heparin. In terms of tissue distribution, expressed by the venom gland, and probably other tissues.

The protein localises to the secreted. In terms of biological role, growth factor active in angiogenesis, vasculogenesis and endothelial cell growth. Induces endothelial cell proliferation, promotes cell migration, inhibits apoptosis and induces permeabilization of blood vessels. This chain is Vascular endothelial growth factor A, found in Agkistrodon piscivorus piscivorus (Eastern cottonmouth).